A 384-amino-acid polypeptide reads, in one-letter code: Zinc metalloproteinase nas-12 (384 aa).

A signal peptide spans 1–25; that stretch reads MLYIPQFSIYFCLGYLLLFCKISNA. Residues 73–271 enclose the Peptidase M12A domain; it reads VSIKGSSMNR…EKLNRLGQCG (199 aa). Intrachain disulfides connect C116–C270, C137–C156, C287–C325, C296–C318, and C305–C322. Residue H164 coordinates Zn(2+). E165 is an active-site residue. H168 and H174 together coordinate Zn(2+). One can recognise a ShKT 1 domain in the interval 287–325; sequence CQDVATAVSCEGNRRRGMCKNPFYKQMMIKSCQKTCRLC. An N-linked (GlcNAc...) asparagine glycan is attached at N340. 3 disulfide bridges follow: C348–C384, C355–C377, and C364–C381. In terms of domain architecture, ShKT 2 spans 348 to 384; it reads CEDKHPRCDIYSHNGFCTLPFYDDVRYQLCAKTCNLC.

Requires Zn(2+) as cofactor. Expressed in pharyngeal glands.

Its subcellular location is the secreted. Functionally, metalloprotease. The chain is Zinc metalloproteinase nas-12 (nas-12) from Caenorhabditis elegans.